The sequence spans 583 residues: Immunity-related GTPase family Q protein (583 aa).

Residues cysteine 152 and cysteine 158 are joined by a disulfide bond. The stretch at 155 to 179 (SDRCEELERLQVVLRTQAEALQRLL) forms a coiled coil. Residues 186-189 (FEVL) carry the LIR 1 motif. Threonine 203 is subject to Phosphothreonine. The region spanning 223-409 (ARLDLAVAGT…PGLGTWLQHA (187 aa)) is the IRG-type G domain. The segment at 322–373 (APLVGVRTDGQGEDPPEVLEEEKAQNASDGNSGDARSEGKKAGIGDSGCTAA) is disordered. A compositionally biased stretch (acidic residues) spans 332–341 (QGEDPPEVLE). The short motif at 381–384 (WEVL) is the LIR 2 element.

It belongs to the TRAFAC class dynamin-like GTPase superfamily. IRG family. In terms of assembly, interacts (via LIR motif 1) with GABARAPL2. Interacts (via LIR motif 2) with MAP1LC3B/LC3B.

It is found in the lysosome. The protein resides in the cytoplasmic vesicle. It localises to the autophagosome. Functionally, autophagy receptor that specifically promotes clearance of misfolded MHC class I molecules by targeting them to the lysosome for degradation. Acts as a molecular adapter that specifically recognizes and binds (1) misfolded MHC class I molecules following their ubiquitination, as well as (2) autophagy-related proteins, promoting the recruitment of misfolded MHC class I molecules to autophagy machinery for degradation. Degradation of misfolded MHC class I molecules is essential to prevent accumulation of defective MHC class I complexes at the surface of CD8(+) T-cells and prevent a stronger T-cell-mediated response. In contrast to other members of the family, does not show GTPase activity. The protein is Immunity-related GTPase family Q protein (Irgq) of Mus musculus (Mouse).